We begin with the raw amino-acid sequence, 388 residues long: uncharacterized protein (388 aa).

[4Fe-4S] cluster is bound by residues cysteine 18, cysteine 24, cysteine 27, and cysteine 99. The S-adenosyl-L-methionine site is built by glutamine 212, glutamate 262, and asparagine 313. The active-site Nucleophile is the cysteine 343.

Belongs to the class I-like SAM-binding methyltransferase superfamily. RNA M5U methyltransferase family.

This is an uncharacterized protein from Bdellovibrio bacteriovorus (strain ATCC 15356 / DSM 50701 / NCIMB 9529 / HD100).